A 163-amino-acid chain; its full sequence is Crossover junction endodeoxyribonuclease RuvC (163 aa).

Catalysis depends on residues Asp-8, Glu-68, and Asp-140. Mg(2+)-binding residues include Asp-8, Glu-68, and Asp-140.

Belongs to the RuvC family. Homodimer which binds Holliday junction (HJ) DNA. The HJ becomes 2-fold symmetrical on binding to RuvC with unstacked arms; it has a different conformation from HJ DNA in complex with RuvA. In the full resolvosome a probable DNA-RuvA(4)-RuvB(12)-RuvC(2) complex forms which resolves the HJ. Mg(2+) is required as a cofactor.

The protein localises to the cytoplasm. The catalysed reaction is Endonucleolytic cleavage at a junction such as a reciprocal single-stranded crossover between two homologous DNA duplexes (Holliday junction).. The RuvA-RuvB-RuvC complex processes Holliday junction (HJ) DNA during genetic recombination and DNA repair. Endonuclease that resolves HJ intermediates. Cleaves cruciform DNA by making single-stranded nicks across the HJ at symmetrical positions within the homologous arms, yielding a 5'-phosphate and a 3'-hydroxyl group; requires a central core of homology in the junction. The consensus cleavage sequence is 5'-(A/T)TT(C/G)-3'. Cleavage occurs on the 3'-side of the TT dinucleotide at the point of strand exchange. HJ branch migration catalyzed by RuvA-RuvB allows RuvC to scan DNA until it finds its consensus sequence, where it cleaves and resolves the cruciform DNA. This Erythrobacter litoralis (strain HTCC2594) protein is Crossover junction endodeoxyribonuclease RuvC.